The sequence spans 193 residues: ATP-dependent Clp protease proteolytic subunit (193 aa).

The active-site Nucleophile is S98. H123 is an active-site residue.

This sequence belongs to the peptidase S14 family. Fourteen ClpP subunits assemble into 2 heptameric rings which stack back to back to give a disk-like structure with a central cavity, resembling the structure of eukaryotic proteasomes.

The protein localises to the cytoplasm. The enzyme catalyses Hydrolysis of proteins to small peptides in the presence of ATP and magnesium. alpha-casein is the usual test substrate. In the absence of ATP, only oligopeptides shorter than five residues are hydrolyzed (such as succinyl-Leu-Tyr-|-NHMec, and Leu-Tyr-Leu-|-Tyr-Trp, in which cleavage of the -Tyr-|-Leu- and -Tyr-|-Trp bonds also occurs).. Cleaves peptides in various proteins in a process that requires ATP hydrolysis. Has a chymotrypsin-like activity. Plays a major role in the degradation of misfolded proteins. ClpXP is involved in the complete degradation of the Site-2 clipped anti-sigma-W factor RsiW. This results in the release of SigW and the transcription activation of the genes under the control of the sigma-W factor. This chain is ATP-dependent Clp protease proteolytic subunit, found in Oceanobacillus iheyensis (strain DSM 14371 / CIP 107618 / JCM 11309 / KCTC 3954 / HTE831).